The sequence spans 843 residues: Tetratricopeptide repeat protein 7B (843 aa).

Residues 97-131 form a TPR 1 repeat; that stretch reads QESNLVMAKLTYVEGDYKEALNIYARVGLDDLPLT. A phosphoserine mark is found at serine 160 and serine 202. TPR repeat units lie at residues 219-252, 363-396, 397-430, 479-514, 516-548, and 549-582; these read ETGL…VETR, SVVY…AFEE, FHLW…KPDD, TYSL…SPTD, QAAF…QGDD, and ANSL…YPEN. Phosphoserine occurs at positions 625, 629, 630, 673, 677, 678, and 681. TPR repeat units follow at residues 696 to 729, 730 to 763, 765 to 797, and 798 to 831; these read AQIW…FPMS, HNVL…SPTH, KSMQ…NSTA, and HEVW…EASS.

Component of a phosphatidylinositol 4-kinase (PI4K) complex, composed of PI4KA, EFR3 (EFR3A or EFR3B), TTC7 (TTC7A or TTC7B) and HYCC (HYCC1 or HYCC2). Interacts with PI4KA, interaction is direct. Interacts with EFR3 (EFR3A or EFR3B), interaction is direct. Interacts with HYCC (HYCC1 or HYCC2), interaction is direct. Association with the PI4K complex is strongly reduced by TMEM150A.

The protein resides in the cytoplasm. Its subcellular location is the cytosol. The protein localises to the cell membrane. Component of a complex required to localize phosphatidylinositol 4-kinase (PI4K) to the plasma membrane. The complex acts as a regulator of phosphatidylinositol 4-phosphate (PtdIns(4)P) synthesis. In the complex, plays a central role in bridging PI4KA to EFR3B and HYCC1, via direct interactions. This is Tetratricopeptide repeat protein 7B from Mus musculus (Mouse).